A 193-amino-acid polypeptide reads, in one-letter code: dTTP/UTP pyrophosphatase (193 aa).

The active-site Proton acceptor is Asp-70.

The protein belongs to the Maf family. YhdE subfamily. A divalent metal cation serves as cofactor.

It localises to the cytoplasm. The catalysed reaction is dTTP + H2O = dTMP + diphosphate + H(+). It catalyses the reaction UTP + H2O = UMP + diphosphate + H(+). Nucleoside triphosphate pyrophosphatase that hydrolyzes dTTP and UTP. May have a dual role in cell division arrest and in preventing the incorporation of modified nucleotides into cellular nucleic acids. The polypeptide is dTTP/UTP pyrophosphatase (Alcanivorax borkumensis (strain ATCC 700651 / DSM 11573 / NCIMB 13689 / SK2)).